Reading from the N-terminus, the 59-residue chain is Conotoxin mr5a (59 aa).

The signal sequence occupies residues 1-22; it reads MRCLPVFVILLLLIASAPSVDA. Positions 23–48 are excised as a propeptide; it reads RPKTKDDMPLASFHDNAKRILQILQD.

Post-translationally, contains 2 disulfide bonds that can be either 'C1-C3, C2-C4' or 'C1-C4, C2-C3', since these disulfide connectivities have been observed for conotoxins with cysteine framework V (for examples, see AC P0DQQ7 and AC P81755). As to expression, expressed by the venom duct.

The protein localises to the secreted. This Conus marmoreus (Marble cone) protein is Conotoxin mr5a.